The sequence spans 298 residues: Tyrosine recombinase XerC (298 aa).

The Core-binding (CB) domain maps to 2–88; that stretch reads TDLHTDVERY…ALRSFFDWLV (87 aa). Residues 109–288 form the Tyr recombinase domain; sequence HLPKNIDVDD…DFQHLASVYD (180 aa). Active-site residues include arginine 148, lysine 172, histidine 240, arginine 243, and histidine 266. The O-(3'-phospho-DNA)-tyrosine intermediate role is filled by tyrosine 275.

This sequence belongs to the 'phage' integrase family. XerC subfamily. As to quaternary structure, forms a cyclic heterotetrameric complex composed of two molecules of XerC and two molecules of XerD, in which XerC interacts with XerD via its C-terminal region, XerD interacts with XerC via its C-terminal region and so on.

The protein localises to the cytoplasm. With respect to regulation, ftsK may regulate the catalytic switch between XerC and XerD in the heterotetrameric complex during the two steps of the recombination process. Site-specific tyrosine recombinase, which acts by catalyzing the cutting and rejoining of the recombining DNA molecules. Binds cooperatively to specific DNA consensus sequences that are separated from XerD binding sites by a short central region, forming the heterotetrameric XerC-XerD complex that recombines DNA substrates. The complex is essential to convert dimers of the bacterial chromosome into monomers to permit their segregation at cell division. It also contributes to the segregational stability of plasmids. In the complex XerC specifically exchanges the top DNA strands. This chain is Tyrosine recombinase XerC, found in Escherichia coli O139:H28 (strain E24377A / ETEC).